We begin with the raw amino-acid sequence, 121 residues long: Histone H2B, sperm (121 aa).

The tract at residues 1–30 (MPPKSGKGQKKAGKAKGAPRSDKKRRRKRK) is disordered. A N,N-dimethylproline modification is found at Pro-2. The O-linked (GlcNAc) serine glycan is linked to Ser-108. Lys-116 is covalently cross-linked (Glycyl lysine isopeptide (Lys-Gly) (interchain with G-Cter in ubiquitin)).

This sequence belongs to the histone H2B family. In terms of assembly, the nucleosome is a histone octamer containing two molecules each of H2A, H2B, H3 and H4 assembled in one H3-H4 heterotetramer and two H2A-H2B heterodimers. The octamer wraps approximately 147 bp of DNA. Post-translationally, monoubiquitination of Lys-116 gives a specific tag for epigenetic transcriptional activation and is also prerequisite for histone H3 'Lys-4' and 'Lys-79' methylation. GlcNAcylation at Ser-108 promotes monoubiquitination of Lys-116. It fluctuates in response to extracellular glucose, and associates with transcribed genes.

The protein resides in the nucleus. The protein localises to the chromosome. Its function is as follows. Core component of nucleosome. Nucleosomes wrap and compact DNA into chromatin, limiting DNA accessibility to the cellular machineries which require DNA as a template. Histones thereby play a central role in transcription regulation, DNA repair, DNA replication and chromosomal stability. DNA accessibility is regulated via a complex set of post-translational modifications of histones, also called histone code, and nucleosome remodeling. The polypeptide is Histone H2B, sperm (Marthasterias glacialis (Spiny starfish)).